Here is a 58-residue protein sequence, read N- to C-terminus: Metallothionein-1 (58 aa).

Residues 1–28 form a beta region; the sequence is PGPCCKDKCECAEGGCKTGCKCTSCRCA. Positions 4, 5, 9, 11, 16, 20, 22, 25, 27, 30, 33, 37, 39, 45, 49, 53, 55, and 56 each coordinate a divalent metal cation. The interval 29–58 is alpha; sequence PCEKCTSGCKCPSKDECAKTCSKPCSCCXX.

It belongs to the metallothionein superfamily. Type 3 family.

Metallothioneins have a high content of cysteine residues that bind various heavy metals. The different forms of lobster metallothioneins may have different biological functions. Class I MTS in marine crustacea are involved in the sequestration of elevated levels of heavy-metal ions. Binds 6 metal ions. Known to bind cadmium. The protein is Metallothionein-1 of Homarus americanus (American lobster).